The following is a 459-amino-acid chain: Neuronal acetylcholine receptor subunit beta-2 (459 aa).

Over 1 to 203 (LRSDFLLGPE…ITYDFVIKRK (203 aa)) the chain is Extracellular. 2 N-linked (GlcNAc...) asparagine glycosylation sites follow: N21 and N138. A disulfide bridge connects residues C125 and C139. The chain crosses the membrane as a helical span at residues 204–228 (PLFYTINLIIPCVLITSLAILVFYL). Topologically, residues 229-235 (PSDCGEK) are cytoplasmic. Residues 236-254 (VTLCMSVLLALTVFLLLIS) form a helical membrane-spanning segment. Residues 255–269 (KIVPPTSLAVPLIGK) are Extracellular-facing. Residues 270–291 (YLMFTMVLVTFSIVTSVCVLNV) form a helical membrane-spanning segment. The Cytoplasmic segment spans residues 292–421 (HHRSPSTHYM…WKYVAMVIDR (130 aa)). The chain crosses the membrane as a helical span at residues 422–440 (LFLWIFILVCVVGTLGLFV).

Belongs to the ligand-gated ion channel (TC 1.A.9) family. Acetylcholine receptor (TC 1.A.9.1) subfamily. Beta-2/CHRNB2 sub-subfamily. As to quaternary structure, neuronal AChR is a heteropentamer composed of two different types of subunits: alpha and beta. CHRNB2/Beta-2 subunit can be combined to CHRNA2/alpha-2, CHRNA3/alpha-3 or CHRNA4/alpha-4, CHRNA5/alpha-5, CHRNA6/alpha-6 and CHRNB3/beta-3 to give rise to functional receptors.

It is found in the synaptic cell membrane. The protein localises to the cell membrane. The enzyme catalyses Ca(2+)(in) = Ca(2+)(out). It catalyses the reaction K(+)(in) = K(+)(out). It carries out the reaction Na(+)(in) = Na(+)(out). Activated by a myriad of ligands such as acetylcholine, cytisine, nicotine, choline and epibatidine. nAChR activity is inhibited by the antagonist alpha-conotoxins BuIA, PnIA, PnIC, GID and MII, small disulfide-constrained peptides from cone snails. Its function is as follows. Component of neuronal acetylcholine receptors (nAChRs) that function as pentameric, ligand-gated cation channels with high calcium permeability among other activities. nAChRs are excitatory neurotrasnmitter receptors formed by a collection of nAChR subunits known to mediate synaptic transmission in the nervous system and the neuromuscular junction. Each nAchR subunit confers differential attributes to channel properties, including activation, deactivation and desensitization kinetics, pH sensitivity, cation permeability, and binding to allosteric modulators. CHRNB2 forms heteropentameric neuronal acetylcholine receptors with CHRNA2, CHRNA3, CHRNA4 and CHRNA6, as well as CHRNA5 and CHRNB3 as accesory subunits. The sequence is that of Neuronal acetylcholine receptor subunit beta-2 (chrnb2) from Carassius auratus (Goldfish).